The primary structure comprises 328 residues: Galactinol synthase 10 (328 aa).

K106 is an active-site residue. Positions 122, 124, and 248 each coordinate Mn(2+).

This sequence belongs to the glycosyltransferase 8 family. Galactosyltransferase subfamily. A divalent metal cation serves as cofactor.

It localises to the cytoplasm. It carries out the reaction myo-inositol + UDP-alpha-D-galactose = alpha-D-galactosyl-(1-&gt;3)-1D-myo-inositol + UDP + H(+). In terms of biological role, galactinol synthase involved in the biosynthesis of raffinose family oligosaccharides (RFOs) that function as osmoprotectants. May promote plant stress tolerance. The sequence is that of Galactinol synthase 10 (GOLS10) from Arabidopsis thaliana (Mouse-ear cress).